A 650-amino-acid chain; its full sequence is Probable LIM domain-containing serine/threonine-protein kinase DDB_G0287001 (650 aa).

LIM zinc-binding domains lie at 4 to 63 (NNCG…KLNA) and 64 to 122 (RKCF…PSDK). 3 disordered regions span residues 118-138 (KPSD…LPGK), 171-197 (LSSS…SSFM), and 293-320 (LLNS…NLNT). The segment covering 173–188 (SSGGSGNSISGSGGTN) has biased composition (gly residues). The Protein kinase domain occupies 386–643 (VAFGDVIASG…DTLKKISESL (258 aa)). Residues 392–400 (IASGASGKV) and lysine 413 contribute to the ATP site. Residue aspartate 509 is the Proton acceptor of the active site.

The protein belongs to the protein kinase superfamily. TKL Ser/Thr protein kinase family.

It catalyses the reaction L-seryl-[protein] + ATP = O-phospho-L-seryl-[protein] + ADP + H(+). The catalysed reaction is L-threonyl-[protein] + ATP = O-phospho-L-threonyl-[protein] + ADP + H(+). The chain is Probable LIM domain-containing serine/threonine-protein kinase DDB_G0287001 from Dictyostelium discoideum (Social amoeba).